We begin with the raw amino-acid sequence, 343 residues long: MTGIISTDVLIVGAGPVGLFAVFELGLFDMKCHLIDILDKPGGQCAELYPEKPIYDIPGWPSISAQGLVDKLLEQIHPFKPDFTYNRMVSSLEKLEDGSFRVTTDENEVFEAKVVVIAAGGGSFQPKRPPIPGIEPYEGKSVFYSVRRMEDFRGHDLVIVGGGDSALDWTLNLQPVAKSVTLVHRRPEFRAAPDSVNKMYAMQEMKQLEFRVGQVTGLTGADGQLSSATIKGGPDGDIEVPCTRMLPFFGLTMKLGPIAEWGLNLHENLIPVDTEKFQTSVPGIFAVGDINSYPGKLKLILSGFHEVALMAQAAKRIVSPGERIVFQYTTSSTSLQKKLGVVG.

FAD-binding residues include aspartate 36, glutamine 44, tyrosine 49, valine 89, phenylalanine 124, aspartate 289, and threonine 330.

It belongs to the ferredoxin--NADP reductase type 2 family. As to quaternary structure, homodimer. It depends on FAD as a cofactor.

It catalyses the reaction 2 reduced [2Fe-2S]-[ferredoxin] + NADP(+) + H(+) = 2 oxidized [2Fe-2S]-[ferredoxin] + NADPH. The sequence is that of Ferredoxin--NADP reductase from Mesorhizobium japonicum (strain LMG 29417 / CECT 9101 / MAFF 303099) (Mesorhizobium loti (strain MAFF 303099)).